The sequence spans 1172 residues: DNA-directed RNA polymerases IV and V subunit 2 (1172 aa).

Asp786 is a binding site for Mg(2+). Zn(2+)-binding residues include Cys1108, Cys1111, Cys1133, and Cys1136. A C4-type zinc finger spans residues Cys1108–Cys1136.

Belongs to the RNA polymerase beta chain family. As to quaternary structure, component of the RNA polymerase IV and V complexes. Interacts with SSH1, NRPD1 and NRPE1. As to expression, mostly expressed in seedlings, flowers and roots, present ubiquitously, except in sperm cells.

It localises to the nucleus. It carries out the reaction RNA(n) + a ribonucleoside 5'-triphosphate = RNA(n+1) + diphosphate. Functionally, DNA-dependent RNA polymerase catalyzes the transcription of DNA into RNA using the four ribonucleoside triphosphates as substrates. Second largest component of RNA polymerases IV and V which mediate short-interfering RNAs (siRNA) accumulation and subsequent RNA-directed DNA methylation-dependent (RdDM) transcriptional gene silencing (TGS) of endogenous repeated sequences, including transposable elements. Proposed to contribute to the polymerase catalytic activity and forms the polymerase active center together with the largest subunit. Also required for full erasure of methylation when the RNA trigger is withdrawn. Required for intercellular RNA interference (RNAi) leading to systemic post-transcriptional gene silencing. Involved in the maintenance of post-transcriptional RNA silencing. During interphase, mediates siRNA-independent heterochromatin association and methylation into chromocenters and condensation and cytosine methylation at pericentromeric major repeats. Required for complete maintenance of the 35S promoter homology-dependent TGS in transgenic plants and for the initial establishment of DNA methylation. This Arabidopsis thaliana (Mouse-ear cress) protein is DNA-directed RNA polymerases IV and V subunit 2 (NRPD2).